Consider the following 353-residue polypeptide: tRNA-specific 2-thiouridylase MnmA 1 (353 aa).

Residues A9–S16 and M35 each bind ATP. The active-site Nucleophile is C98. C98 and C194 are joined by a disulfide. An ATP-binding site is contributed by G122. The segment at K144–Q146 is interaction with tRNA. Residue C194 is the Cysteine persulfide intermediate of the active site. Residues R300–Y301 form an interaction with tRNA region.

The protein belongs to the MnmA/TRMU family.

The protein resides in the cytoplasm. The enzyme catalyses S-sulfanyl-L-cysteinyl-[protein] + uridine(34) in tRNA + AH2 + ATP = 2-thiouridine(34) in tRNA + L-cysteinyl-[protein] + A + AMP + diphosphate + H(+). Functionally, catalyzes the 2-thiolation of uridine at the wobble position (U34) of tRNA, leading to the formation of s(2)U34. This Clostridium botulinum (strain Okra / Type B1) protein is tRNA-specific 2-thiouridylase MnmA 1.